Reading from the N-terminus, the 686-residue chain is MLSKVVLLVALAAICGAQGASYAGRHTADMDFLHKQKKIFDLLLYVRQADLSDAEWYDVGRNYDMESNMDMYKDKNVVQKFLWWYKQGMFLSRNAIFTPLNSEQKYEVRMLFELLYNAKDFQTFYKTAAWARLRMNSGMFTTAFSIAVLYRPDTKYMKFPAIYEIYPNYFFDSSVIEEAQNLKMSRGSSVVTGMNNIETYIVNTNYSSKNMREYNDPEYKLDYFMEDVELNAYYYYMREMLPYWMSSSQYHMPKEIRGQLYYFLHKQLMTRYFLERMSNDLGKTAEFDWNKPINSGFYSTIMYSNGVTFPQRNRFSSLPYYKYKYLNVINALEMRLMDAIDSGYLIDEYGKKIDIYTPEGLNMLGNVIEGSSDSINTKFYGMYDILARDILGYNFDFQNKNNLIPSALQSYSTSMRDPAFYMLYQNILSYFLRYKKLQPQYSQSELQMPGVKFESVNIDKLYTYFDKCDTLINNAVAVENFKGGMYLRLKARRACMNYERFTYKININSDKETKGMMRIFLGPAFDEIKHDMVYLQKYFYLFMEMDRFAVTLRPGSNSIERQSSESPFTTSTIMPSDIFYDKLNKAIGGSEPFTYSEKMLGFPERLILPRGKPEGMRYKMFFFLSSMDESNTKSYEIPLYGKMTLDDKVFGFPLDRPMWAWNFTIPNMYFKDVFIYNRPNEESMNY.

The N-terminal stretch at 1-19 is a signal peptide; the sequence is MLSKVVLLVALAAICGAQG. Residues 32 to 155 enclose the Hemocyanin N-terminal domain; it reads FLHKQKKIFD…IAVLYRPDTK (124 aa). Positions 161–431 constitute a Hemocyanin middle domain; sequence AIYEIYPNYF…MLYQNILSYF (271 aa). Residues asparagine 205 and asparagine 662 are each glycosylated (N-linked (GlcNAc...) asparagine). The 237-residue stretch at 440 to 676 folds into the Hemocyanin C-terminal domain; that stretch reads QYSQSELQMP…NMYFKDVFIY (237 aa).

The protein belongs to the hemocyanin/hexamerin family. In terms of assembly, probable homohexamer. As to expression, expressed in the fat body and secreted into the hemolymph (at protein level). Present in trophocytes and oenocytes of the fat body (at protein level). Not expressed in ovary or testis.

Its subcellular location is the secreted. It localises to the nucleus. The protein resides in the cytoplasm. It is found in the cytoplasmic granule. Storage protein that may function as a nutrient supply to compensate for lack of dietary proteins during metamorphosis and egg production. The chain is Hexamerin 70c from Apis mellifera (Honeybee).